The chain runs to 241 residues: Carboxy-S-adenosyl-L-methionine synthase (241 aa).

S-adenosyl-L-methionine-binding positions include Tyr38, 63–65 (GCS), 88–89 (DN), 116–117 (DI), Asn131, and Arg198.

The protein belongs to the class I-like SAM-binding methyltransferase superfamily. Cx-SAM synthase family. As to quaternary structure, homodimer.

The enzyme catalyses prephenate + S-adenosyl-L-methionine = carboxy-S-adenosyl-L-methionine + 3-phenylpyruvate + H2O. In terms of biological role, catalyzes the conversion of S-adenosyl-L-methionine (SAM) to carboxy-S-adenosyl-L-methionine (Cx-SAM). This chain is Carboxy-S-adenosyl-L-methionine synthase, found in Glaesserella parasuis serovar 5 (strain SH0165) (Haemophilus parasuis).